We begin with the raw amino-acid sequence, 464 residues long: UDP-N-acetylmuramate--L-alanine ligase (464 aa).

ATP is bound at residue 112-118 (GTHGKTT).

It belongs to the MurCDEF family.

The protein resides in the cytoplasm. It carries out the reaction UDP-N-acetyl-alpha-D-muramate + L-alanine + ATP = UDP-N-acetyl-alpha-D-muramoyl-L-alanine + ADP + phosphate + H(+). Its pathway is cell wall biogenesis; peptidoglycan biosynthesis. Cell wall formation. This Chromobacterium violaceum (strain ATCC 12472 / DSM 30191 / JCM 1249 / CCUG 213 / NBRC 12614 / NCIMB 9131 / NCTC 9757 / MK) protein is UDP-N-acetylmuramate--L-alanine ligase.